Consider the following 985-residue polypeptide: MNGSGGRQMQCGKKADDKSLLARFFHADRSLTAVASELDSFDGRAEPDRCTRLVSKLRLNQDKVLAITNLIMEELLGEDRDPRAFRAKFPEEVLQENLAGQLWFGAECLAAGSSIMNREAESKEMRPLAQAVTKSLGNVRVLLRDQCLRNNVPNSKTLQLDLNDSTTEQLYESLKIFDRLFAEFELSYVSAMVQVKSRHEYEMQQWIGVLFSETLQRALKIGLLDQDMVDAFDPGLMFSIPRLAIVAGLVVYAKGPLNMDMPGDQLSEMFRPFRTILIKIRDLLRNLNHEELYQLEKVLCTNEDINAKAPLGSSSIEAPSPEHSSHHPTTSSNNNNNNGDTTGTTNTHRTVERLVDQRNNNNNNNTSSAPALDKAANRSPSMLSLSPNSTPTASPAPSPTPSHSIASTSSSATGSTHPPADWSDGDDEDEEDDDDDIEVEEEELDSTDDETDEEQLLKDIVAADCASGYLIPNTNLGNLLQPQEVPLTDNFVASEDDEYGAGEQQRQRHRDGQEDEPSTSAAMLAASRTLQRLRLPSSDAEPLAEQSTIKTPEQEQDQPHQSVYRHRHSHRHHHRHHHHHHQRHHHHQHQQPPQPHPHRTTRSGRKRCSLDSTESEATQPERDREPSQASGDTSAASSLSDDVSLAMRNTTARLKFKSTENLLHRLFVCIAGVADQLQTNFASDLRQILRSVFLMNMSSAQEEIDIPEKTKESELFEFRASENDVIQESAGSNQSIYSAEEVNPELDNVFSAGSGGGSPGNGNQANASAQRHSAGGSIQRNNTVDDGSPTGGGALLATSRSHVMRSRSLGDQESASTSTSSSQLHQEQQQLQIQVQRQRNNSVGSNTPSSASSTSSSSEQNSPVSARSGSRRRLQSNNETQMPSSATVTTTATATLAPPAWIPDGKAPRCMSCQTPFTAFRRRHHCRNCGGVFCGVCSNASAPLPKYGLTKAVRVCRECYVREVRSGMSVQGVPSVQERLTATAS.

Disordered stretches follow at residues P310–E453, E498–S520, L533–S640, and D747–A892. 3 stretches are compositionally biased toward low complexity: residues H327–H348, S384–A393, and P401–W422. Acidic residues predominate over residues S423–E453. 2 positions are modified to phosphoserine: S537 and S538. Basic residues-rich tracts occupy residues V563–H589 and H596–R607. Low complexity-rich tracts occupy residues A629–S640 and N761–Q770. The segment covering G776 to D785 has biased composition (polar residues). At S808 the chain carries Phosphoserine. Positions Q812–A866 are enriched in low complexity. The span at Q875 to S885 shows a compositional bias: polar residues. The FYVE-type zinc-finger motif lies at D904–V964. The Zn(2+) site is built by C910, C913, C926, C929, C934, C937, C956, and C959.

This sequence belongs to the lst-2 family.

Negative regulator of epidermal growth factor receptor (EGFR) signaling. The protein is Lateral signaling target protein 2 homolog of Drosophila ananassae (Fruit fly).